A 320-amino-acid chain; its full sequence is Transcription factor bHLH96 (320 aa).

The interval 30–121 (EEEDQDPQDT…RSSKNKEEIE (92 aa)) is disordered. Residues 65 to 76 (YSDDYNYNEEDL) are compositionally biased toward acidic residues. Residues 104 to 114 (GRRKRRRTRSS) show a composition bias toward basic residues. Residues 122 to 173 (NQRMTHIAVERNRRKQMNEYLAVLRSLMPPYYAQRGDQASIVGGAINYLKEL) enclose the bHLH domain. The interval 184 to 206 (VKTATEDTGAGHDQTKTTSASSS) is disordered. Residues 244 to 320 (SLKILAKKRP…RRIEEESSFS (77 aa)) enclose the ACT domain.

In terms of assembly, homodimer. As to expression, expressed constitutively in roots, leaves, stems, and flowers.

The protein resides in the nucleus. The protein is Transcription factor bHLH96 (BHLH96) of Arabidopsis thaliana (Mouse-ear cress).